We begin with the raw amino-acid sequence, 94 residues long: Protein FAM24B (94 aa).

The first 21 residues, 1–21 (MPVIAGGILAALLLLIVVVLC), serve as a signal peptide directing secretion.

The protein belongs to the FAM24 family.

It is found in the secreted. This chain is Protein FAM24B (FAM24B), found in Homo sapiens (Human).